Here is a 571-residue protein sequence, read N- to C-terminus: MNDEEKHLAAPANAYQPNMHYQQQQEKQTGYNAEYDTHQGGYNQNQNQDYYNHSQGGYQMDNMGQHGGYQGNPNDNYNNQQPPPYTPDFPPDYNYKPNPNAATFDEAFAVPKPKWNDKIGLVILALIFSGYLALSIIVIRAYAQTHSFQGWGIYSGENDYSLNTHTLILYAFVLATAMVLSLLYFIAARVWTKQFIWITYILHLLFSWGTAIYYLVVGYYSAGIVFIVFAALTTWWFWCSRKRIPFATIVLQTLIDVTRANPSVLVISAVGTVVGACFGTWFSFTIVSIYVKYDPDNRNPGCMTTGGSCSNGKLIGLILFAIFCGYYLTEVIKNVIHVTISGVYGSWYYCSKSDQGMPKHAAMSSFRRAVTYSLGSISLGSLIVSIINFIRQILSVLQQDARQSGDTLATVLLCFVQCCFGVLDWLVTYFNHYAYSYIALYGKAYVPSAKATWKLMQTRGIDAMVNDSLIGSVLSFGASFVAYAAALVAYCFLKYTDPSYNSGGGFYAPVVGLAFVIALQVSNITNVSLKSGCSTFFLALARDPEVLRVSYPQIYEEICRTYPPARDKLDI.

The disordered stretch occupies residues 1-96; it reads MNDEEKHLAA…PDFPPDYNYK (96 aa). Over 1–118 the chain is Cytoplasmic; sequence MNDEEKHLAA…AVPKPKWNDK (118 aa). A compositionally biased stretch (polar residues) spans 15-31; that stretch reads YQPNMHYQQQQEKQTGY. 2 stretches are compositionally biased toward low complexity: residues 39 to 52 and 71 to 80; these read QGGYNQNQNQDYYN and GNPNDNYNNQ. The span at 81–90 shows a compositional bias: pro residues; that stretch reads QPPPYTPDFP. A helical transmembrane segment spans residues 119–139; the sequence is IGLVILALIFSGYLALSIIVI. The Extracellular segment spans residues 140-166; it reads RAYAQTHSFQGWGIYSGENDYSLNTHT. A helical membrane pass occupies residues 167–187; sequence LILYAFVLATAMVLSLLYFIA. Over 188 to 189 the chain is Cytoplasmic; that stretch reads AR. Residues 190-210 form a helical membrane-spanning segment; sequence VWTKQFIWITYILHLLFSWGT. A topological domain (extracellular) is located at residue alanine 211. The helical transmembrane segment at 212–232 threads the bilayer; it reads IYYLVVGYYSAGIVFIVFAAL. At 233-263 the chain is on the cytoplasmic side; it reads TTWWFWCSRKRIPFATIVLQTLIDVTRANPS. The chain crosses the membrane as a helical span at residues 264–284; the sequence is VLVISAVGTVVGACFGTWFSF. Topologically, residues 285 to 311 are extracellular; the sequence is TIVSIYVKYDPDNRNPGCMTTGGSCSN. Residues 312 to 332 form a helical membrane-spanning segment; it reads GKLIGLILFAIFCGYYLTEVI. The Cytoplasmic portion of the chain corresponds to 333-369; the sequence is KNVIHVTISGVYGSWYYCSKSDQGMPKHAAMSSFRRA. The helical transmembrane segment at 370–390 threads the bilayer; sequence VTYSLGSISLGSLIVSIINFI. Topologically, residues 391-406 are extracellular; it reads RQILSVLQQDARQSGD. A helical transmembrane segment spans residues 407-427; that stretch reads TLATVLLCFVQCCFGVLDWLV. Topologically, residues 428–472 are cytoplasmic; it reads TYFNHYAYSYIALYGKAYVPSAKATWKLMQTRGIDAMVNDSLIGS. The helical transmembrane segment at 473–493 threads the bilayer; it reads VLSFGASFVAYAAALVAYCFL. At 494-503 the chain is on the extracellular side; it reads KYTDPSYNSG. Residues 504 to 524 form a helical membrane-spanning segment; sequence GGFYAPVVGLAFVIALQVSNI. The Cytoplasmic segment spans residues 525-571; the sequence is TNVSLKSGCSTFFLALARDPEVLRVSYPQIYEEICRTYPPARDKLDI.

Belongs to the CTL (choline transporter-like) family.

It is found in the cell membrane. In terms of biological role, probably involved in transport through the plasma membrane. This chain is Protein PNS1 (PNS1), found in Yarrowia lipolytica (strain CLIB 122 / E 150) (Yeast).